The chain runs to 419 residues: Protein transport protein sec9 (419 aa).

Residues 1 to 11 (MKKLFKKKKGV) are compositionally biased toward basic residues. 3 disordered regions span residues 1 to 60 (MKKL…TYGS), 116 to 143 (ARKD…PSQD), and 156 to 186 (ARIQ…EGYR). The span at 21 to 32 (ESNSNTATNAPS) shows a compositional bias: polar residues. Low complexity predominate over residues 36–60 (GGTTANSYSSNSYNDNNNSNSTYGS). Ser-141 carries the post-translational modification Phosphoserine. T-SNARE coiled-coil homology domains lie at 203–265 (QFVK…AREL) and 356–418 (DAME…LRHI).

This sequence belongs to the SNAP-25 family.

Its function is as follows. Has a role in cell separation, a final step of cytokinesis and in the assembly of the forespore membrane. May have a role in the transport of secretory proteins to these growing sites. The chain is Protein transport protein sec9 (sec9) from Schizosaccharomyces pombe (strain 972 / ATCC 24843) (Fission yeast).